The chain runs to 350 residues: Mannonate dehydratase (350 aa).

It belongs to the mannonate dehydratase family. Fe(2+) is required as a cofactor. The cofactor is Mn(2+).

The catalysed reaction is D-mannonate = 2-dehydro-3-deoxy-D-gluconate + H2O. It functions in the pathway carbohydrate metabolism; pentose and glucuronate interconversion. Catalyzes the dehydration of D-mannonate. The polypeptide is Mannonate dehydratase (Clostridium perfringens (strain 13 / Type A)).